A 349-amino-acid chain; its full sequence is MLFAALRDMQWRKRRLVITIISTGLIFGMTLVLTGLANGFRVEARHTVDSMGVDVFVVRSGAAGPFLGSIPFPDVDLARVAAEPGVMAAAPLGSVGTIMKEGTSTRNVTVFGAPEHGPGMPRVSEGRSPSKPDEVAASSTMGRHLGDTVEVGARRLRVVGIVPNSTALAKIPNVFLTTEGLQKLAYNGQPNITSIGIIGMPRQLPEGYQTFDRVGAVNDLVRPLKVAVNSISIVAVLLWIVAVLIVGSVVYLSALERLRDFAVFKAIGTPTRSIMAGLALQALVIALLAAVVGVVLAQVLAPLFPMIVAVPVGAYLALPVAAIVIGLFASVAGLKRVVTVDPAQAFGGP.

Residues 16-36 (LVITIISTGLIFGMTLVLTGL) form a helical membrane-spanning segment. The tract at residues 111 to 139 (FGAPEHGPGMPRVSEGRSPSKPDEVAASS) is disordered. Positions 124-134 (SEGRSPSKPDE) are enriched in basic and acidic residues. 3 helical membrane-spanning segments follow: residues 231 to 251 (ISIVAVLLWIVAVLIVGSVVY), 284 to 304 (VIALLAAVVGVVLAQVLAPLF), and 307 to 327 (IVAVPVGAYLALPVAAIVIGL).

The protein belongs to the ABC-4 integral membrane protein family. In terms of assembly, the complex is composed of two ATP-binding proteins (MT0079), two transmembrane proteins (MT0078) and a solute-binding protein.

Its subcellular location is the cell membrane. Functionally, probably part of an ABC transporter complex. Probably responsible for the translocation of the substrate across the membrane. This is an uncharacterized protein from Mycobacterium tuberculosis (strain CDC 1551 / Oshkosh).